A 542-amino-acid polypeptide reads, in one-letter code: MNYVGLIIVLSCLWLGSNASDPDDPLLVQLPQGKLRGRDNGSYYSYESIPYAEPPTGDLRFEAPEPYKQKWSDIFDATKTPVACLQWDQFTPGANKLVGEEDCLTVSIYKPKNSKRSTFPVVAHIHGGAFMFGAAWQNGHENVMREGKFILVKISYRLGPLGFASTGDRDLPGNYGLKDQRLALKWIKQNIASFGGEPQNVLLIGHSAGGASVHLQMLREDFGQLAKAAFSFSGNALDPWVVQKGARGRAFELGRNVGCESAEDSASLKKCLKSKSASELVTAVRKFLIFSYVPFAPFSPVLEPSDAPDAILTQDPREVIKSGKFGQVPWAVSYVTEDGGYNAALLLKERKSGIVIDDLNDRWLELAPYFLFYRDTKTKKDMDDYSRKIKEDYLGNQKFDIESYSELQRLFTDILFKNSTQESLDLHRKYGKSPAYAYVYDNPAEKGIAQVLANRTDYDFGTVHGDDYFLIFENFVREVEMRPDEEIISRNFINMLADFASSDNGVLKYGECAFKNNVGSEKFQLLAIYIDGCQNRQHVEFP.

An N-terminal signal peptide occupies residues M1–A19. A glycan (N-linked (GlcNAc...) asparagine) is linked at N40. A disulfide bridge links C84 with C103. S207 serves as the catalytic Acyl-ester intermediate. The cysteines at positions 259 and 271 are disulfide-linked. N-linked (GlcNAc...) asparagine glycosylation is found at N418 and N454. H464 acts as the Charge relay system in catalysis. C512 and C533 form a disulfide bridge.

The protein belongs to the type-B carboxylesterase/lipase family. As to quaternary structure, monomer.

The protein localises to the secreted. It catalyses the reaction a carboxylic ester + H2O = an alcohol + a carboxylate + H(+). In terms of biological role, transferred from the ejaculatory bulbs of males to the female genitals upon copulation, plays an important role in the reproductive biology. The sequence is that of Esterase 6 (Est-6) from Drosophila simulans (Fruit fly).